We begin with the raw amino-acid sequence, 213 residues long: Thymidylate kinase (213 aa).

11-18 is a binding site for ATP; sequence GPEGAGKT.

Belongs to the thymidylate kinase family.

The enzyme catalyses dTMP + ATP = dTDP + ADP. In terms of biological role, phosphorylation of dTMP to form dTDP in both de novo and salvage pathways of dTTP synthesis. The sequence is that of Thymidylate kinase from Leuconostoc mesenteroides subsp. mesenteroides (strain ATCC 8293 / DSM 20343 / BCRC 11652 / CCM 1803 / JCM 6124 / NCDO 523 / NBRC 100496 / NCIMB 8023 / NCTC 12954 / NRRL B-1118 / 37Y).